A 202-amino-acid chain; its full sequence is Small ribosomal subunit protein uS4c (202 aa).

Over residues Met1–Arg13 the composition is skewed to basic residues. Residues Met1–Lys41 form a disordered region. The span at Lys29 to Lys41 shows a compositional bias: low complexity. The S4 RNA-binding domain maps to Met90–Met153.

Belongs to the universal ribosomal protein uS4 family. In terms of assembly, part of the 30S ribosomal subunit. Contacts protein S5. The interaction surface between S4 and S5 is involved in control of translational fidelity.

The protein localises to the plastid. Its function is as follows. One of the primary rRNA binding proteins, it binds directly to 16S rRNA where it nucleates assembly of the body of the 30S subunit. In terms of biological role, with S5 and S12 plays an important role in translational accuracy. The chain is Small ribosomal subunit protein uS4c (rps4) from Aneura mirabilis (Parasitic liverwort).